The primary structure comprises 498 residues: Interferon regulatory factor 5 (498 aa).

A Phosphothreonine modification is found at threonine 10. A Nuclear localization signal motif is present at residues 12–18 (PRRVRLK). The IRF tryptophan pentad repeat DNA-binding region spans 14–122 (RVRLKPWLVA…QPYKIYEVCS (109 aa)). The tract at residues 121 to 207 (CSNGPAPTDS…SPLAPPPGNP (87 aa)) is disordered. Residues 150–160 (LQRMLPSLSLT) carry the Nuclear export signal motif. Serine 158 carries the post-translational modification Phosphoserine; by TBK1. The span at 168–206 (TLQPPTLRPPTLQPPTLQPPVVLGPPAPDPSPLAPPPGN) shows a compositional bias: pro residues. Serine 293 bears the Phosphoserine; by TBK1 mark. Serine 301 bears the Phosphoserine mark. Glycyl lysine isopeptide (Lys-Gly) (interchain with G-Cter in ubiquitin) cross-links involve residues lysine 411 and lysine 412. Serine 431, serine 435, serine 437, and serine 440 each carry phosphoserine. A Phosphoserine; by IKKB modification is found at serine 446. Residues 478 to 498 (PPGAGLGVGQGPWPMHPAGMQ) are disordered.

The protein belongs to the IRF family. Homodimer, when phosphorylated. Interacts with TASL (via pLxIS motif); interaction takes place downstream of TLR7, TLR8 or TLR9, leading to its activation. Interacts with MYD88 and TRAF6. In terms of processing, phosphorylation of serine and threonine residues by IKBKB in a C-terminal autoinhibitory region, stimulates dimerization, transport into the nucleus, assembly with the coactivator CBP/EP300 and initiation of transcription. Post-translationally, 'Lys-63'-linked polyubiquitination by TRAF6 is required for activation.

It is found in the cytoplasm. The protein resides in the nucleus. With respect to regulation, maintained as a monomer in an autoinhibited state. Phosphorylation and activation follow the following steps: innate adapter protein TASL recruits IRF5, thereby licensing IRF5 for phosphorylation by IKBKB. Phosphorylated IRF5 dissociates from the adapter proteins, dimerizes, and then enters the nucleus to induce IFNs. Its activity is regulated as follows. (Microbial infection) Activated upon coronavirus SARS-CoV-2 infection. In terms of biological role, transcription factor that plays a critical role in innate immunity by activating expression of type I interferon (IFN) IFNA and INFB and inflammatory cytokines downstream of endolysosomal toll-like receptors TLR7, TLR8 and TLR9. Regulates the transcription of type I IFN genes (IFN-alpha and IFN-beta) and IFN-stimulated genes (ISG) by binding to an interferon-stimulated response element (ISRE) in their promoters. Can efficiently activate both the IFN-beta (IFNB) and the IFN-alpha (IFNA) genes and mediate their induction downstream of the TLR-activated, MyD88-dependent pathway. Key transcription factor regulating the IFN response during SARS-CoV-2 infection. The protein is Interferon regulatory factor 5 of Homo sapiens (Human).